The sequence spans 191 residues: Protein GrpE (191 aa).

Positions 1 to 14 (MEDQKQTPSNQTAT) are enriched in polar residues. A disordered region spans residues 1–35 (MEDQKQTPSNQTATPAGDEATSTAAASPETGAPDT). The segment covering 19–35 (EATSTAAASPETGAPDT) has biased composition (low complexity).

This sequence belongs to the GrpE family. In terms of assembly, homodimer.

It is found in the cytoplasm. Participates actively in the response to hyperosmotic and heat shock by preventing the aggregation of stress-denatured proteins, in association with DnaK and GrpE. It is the nucleotide exchange factor for DnaK and may function as a thermosensor. Unfolded proteins bind initially to DnaJ; upon interaction with the DnaJ-bound protein, DnaK hydrolyzes its bound ATP, resulting in the formation of a stable complex. GrpE releases ADP from DnaK; ATP binding to DnaK triggers the release of the substrate protein, thus completing the reaction cycle. Several rounds of ATP-dependent interactions between DnaJ, DnaK and GrpE are required for fully efficient folding. The polypeptide is Protein GrpE (Cupriavidus taiwanensis (strain DSM 17343 / BCRC 17206 / CCUG 44338 / CIP 107171 / LMG 19424 / R1) (Ralstonia taiwanensis (strain LMG 19424))).